Here is a 75-residue protein sequence, read N- to C-terminus: Small ribosomal subunit protein eS17 (75 aa).

The protein belongs to the eukaryotic ribosomal protein eS17 family.

The sequence is that of Small ribosomal subunit protein eS17 from Thermoplasma acidophilum (strain ATCC 25905 / DSM 1728 / JCM 9062 / NBRC 15155 / AMRC-C165).